The primary structure comprises 240 residues: UDP-2,3-diacylglucosamine hydrolase (240 aa).

Mn(2+) is bound by residues aspartate 7, histidine 9, aspartate 40, asparagine 78, and histidine 113. Substrate is bound at residue 78 to 79 (NR). Aspartate 121, serine 159, threonine 163, lysine 166, and histidine 194 together coordinate substrate. Residues histidine 194 and histidine 196 each contribute to the Mn(2+) site.

The protein belongs to the LpxH family. Mn(2+) serves as cofactor.

The protein localises to the cell inner membrane. It catalyses the reaction UDP-2-N,3-O-bis[(3R)-3-hydroxytetradecanoyl]-alpha-D-glucosamine + H2O = 2-N,3-O-bis[(3R)-3-hydroxytetradecanoyl]-alpha-D-glucosaminyl 1-phosphate + UMP + 2 H(+). It participates in glycolipid biosynthesis; lipid IV(A) biosynthesis; lipid IV(A) from (3R)-3-hydroxytetradecanoyl-[acyl-carrier-protein] and UDP-N-acetyl-alpha-D-glucosamine: step 4/6. Its function is as follows. Hydrolyzes the pyrophosphate bond of UDP-2,3-diacylglucosamine to yield 2,3-diacylglucosamine 1-phosphate (lipid X) and UMP by catalyzing the attack of water at the alpha-P atom. Involved in the biosynthesis of lipid A, a phosphorylated glycolipid that anchors the lipopolysaccharide to the outer membrane of the cell. This Pseudomonas entomophila (strain L48) protein is UDP-2,3-diacylglucosamine hydrolase.